The primary structure comprises 228 residues: Interleukin-27 subunit beta (228 aa).

The signal sequence occupies residues 1 to 18; the sequence is MSKLLFLSLALWASRSPG. Fibronectin type-III domains are found at residues 26 to 124 and 127 to 224; these read ALSQ…VAER and KPDP…VESA. N-linked (GlcNAc...) asparagine glycans are attached at residues Asn54 and Asn104.

This sequence belongs to the type I cytokine receptor family. Type 3 subfamily. As to quaternary structure, heterodimer with IL27/IL27A; not disulfide-linked. This heterodimer is known as interleukin IL-27. Heterodimer with IL12A; not disulfide-linked. This heterodimer is known as interleukin IL-35. Interacts with SQSTM1.

It is found in the secreted. Its function is as follows. Associates with IL27 to form the IL-27 interleukin, a heterodimeric cytokine which functions in innate immunity. IL-27 has pro- and anti-inflammatory properties, that can regulate T-helper cell development, suppress T-cell proliferation, stimulate cytotoxic T-cell activity, induce isotype switching in B-cells, and that has diverse effects on innate immune cells. Among its target cells are CD4 T-helper cells which can differentiate in type 1 effector cells (TH1), type 2 effector cells (TH2) and IL17 producing helper T-cells (TH17). It drives rapid clonal expansion of naive but not memory CD4 T-cells. It also strongly synergizes with IL-12 to trigger interferon-gamma/IFN-gamma production of naive CD4 T-cells, binds to the cytokine receptor WSX-1/TCCR. Another important role of IL-27 is its antitumor activity as well as its antiangiogenic activity with activation of production of antiangiogenic chemokines. The chain is Interleukin-27 subunit beta (Ebi3) from Mus musculus (Mouse).